The primary structure comprises 140 residues: Translation initiation factor 2 subunit beta (140 aa).

The protein belongs to the eIF-2-beta/eIF-5 family. In terms of assembly, heterotrimer composed of an alpha, a beta and a gamma chain.

In terms of biological role, eIF-2 functions in the early steps of protein synthesis by forming a ternary complex with GTP and initiator tRNA. This is Translation initiation factor 2 subunit beta (eif2b) from Pyrococcus abyssi (strain GE5 / Orsay).